A 326-amino-acid chain; its full sequence is Vitamin B12 import system permease protein BtuC (326 aa).

9 consecutive transmembrane segments (helical) span residues 15-35, 61-81, 88-108, 112-132, 146-166, 184-204, 240-260, 274-294, and 302-322; these read WLLC…CAGE, LAVL…QALF, PGLL…VLLG, LPNW…TLIL, LLAG…AIYF, GGVD…LLWI, GWMV…GLVI, VLLP…DVVA, and ELPI…WLLL.

The protein belongs to the binding-protein-dependent transport system permease family. FecCD subfamily. The complex is composed of two ATP-binding proteins (BtuD), two transmembrane proteins (BtuC) and a solute-binding protein (BtuF).

It is found in the cell inner membrane. Part of the ABC transporter complex BtuCDF involved in vitamin B12 import. Involved in the translocation of the substrate across the membrane. The sequence is that of Vitamin B12 import system permease protein BtuC from Escherichia coli O17:K52:H18 (strain UMN026 / ExPEC).